Reading from the N-terminus, the 610-residue chain is UvrABC system protein C (610 aa).

The GIY-YIG domain maps to 16–94 (SQPGVYRMYD…IKLYQPRYNV (79 aa)). In terms of domain architecture, UVR spans 204 to 239 (DQVLTQLISRMETASQNLEFEEAARIRDQIQAVRRV).

Belongs to the UvrC family. Interacts with UvrB in an incision complex.

The protein resides in the cytoplasm. In terms of biological role, the UvrABC repair system catalyzes the recognition and processing of DNA lesions. UvrC both incises the 5' and 3' sides of the lesion. The N-terminal half is responsible for the 3' incision and the C-terminal half is responsible for the 5' incision. In Escherichia coli O1:K1 / APEC, this protein is UvrABC system protein C.